A 283-amino-acid polypeptide reads, in one-letter code: Phosphatidylglycerol--prolipoprotein diacylglyceryl transferase (283 aa).

Transmembrane regions (helical) follow at residues 18 to 38, 59 to 79, 91 to 111, 124 to 144, 185 to 205, 213 to 233, and 251 to 271; these read LFGHPIVWYGLLFALGLIILG, LAVYVFVGTIVGARLGHVLFY, IFVTWEGGLASHGGTIGIIIA, ILWVLDRLAVPTGIVAAMIRL, TQIYEALCYLAVFALCMWLYW, YSGLIVGVFLTGIFLSRFIIE, and GLNMGQLLSIPFVLAGIWLII. A 1,2-diacyl-sn-glycero-3-phospho-(1'-sn-glycerol) is bound at residue Arg143.

It belongs to the Lgt family.

It localises to the cell inner membrane. It carries out the reaction L-cysteinyl-[prolipoprotein] + a 1,2-diacyl-sn-glycero-3-phospho-(1'-sn-glycerol) = an S-1,2-diacyl-sn-glyceryl-L-cysteinyl-[prolipoprotein] + sn-glycerol 1-phosphate + H(+). The protein operates within protein modification; lipoprotein biosynthesis (diacylglyceryl transfer). In terms of biological role, catalyzes the transfer of the diacylglyceryl group from phosphatidylglycerol to the sulfhydryl group of the N-terminal cysteine of a prolipoprotein, the first step in the formation of mature lipoproteins. The protein is Phosphatidylglycerol--prolipoprotein diacylglyceryl transferase of Porphyromonas gingivalis (strain ATCC 33277 / DSM 20709 / CIP 103683 / JCM 12257 / NCTC 11834 / 2561).